The chain runs to 586 residues: Arginine--tRNA ligase (586 aa).

The short motif at 131–141 (ANPTGPLHVGH) is the 'HIGH' region element.

Belongs to the class-I aminoacyl-tRNA synthetase family. As to quaternary structure, monomer.

It is found in the cytoplasm. It carries out the reaction tRNA(Arg) + L-arginine + ATP = L-arginyl-tRNA(Arg) + AMP + diphosphate. The polypeptide is Arginine--tRNA ligase (Nitrosomonas europaea (strain ATCC 19718 / CIP 103999 / KCTC 2705 / NBRC 14298)).